The primary structure comprises 278 residues: Non-structural protein 2a (278 aa).

Belongs to the coronaviruses ns2a protein family.

In Bovine coronavirus (strain Mebus) (BCoV), this protein is Non-structural protein 2a.